The following is a 126-amino-acid chain: Thioredoxin-like 3-3 (126 aa).

Positions 1–24 (MRKQESEGANLEFESKSNDNGNVK) are disordered. Residues 5 to 126 (ESEGANLEFE…RLHDRLWLHS (122 aa)) enclose the Thioredoxin domain. Residues cysteine 55 and cysteine 58 each act as nucleophile in the active site. Cysteines 55 and 58 form a disulfide.

It belongs to the thioredoxin family.

Probable thiol-disulfide oxidoreductase that may participate in various redox reactions. This is Thioredoxin-like 3-3 from Arabidopsis thaliana (Mouse-ear cress).